A 102-amino-acid chain; its full sequence is MALNEQDVARIARLARIELTPDQRGRAQAELNGILHLIERLQAVDTQGVEPLAHPLSAHEDITLRLREDAVSEQATEASRAELLANAPESADGLFLVPKVIE.

The protein belongs to the GatC family. In terms of assembly, heterotrimer of A, B and C subunits.

It catalyses the reaction L-glutamyl-tRNA(Gln) + L-glutamine + ATP + H2O = L-glutaminyl-tRNA(Gln) + L-glutamate + ADP + phosphate + H(+). The enzyme catalyses L-aspartyl-tRNA(Asn) + L-glutamine + ATP + H2O = L-asparaginyl-tRNA(Asn) + L-glutamate + ADP + phosphate + 2 H(+). Its function is as follows. Allows the formation of correctly charged Asn-tRNA(Asn) or Gln-tRNA(Gln) through the transamidation of misacylated Asp-tRNA(Asn) or Glu-tRNA(Gln) in organisms which lack either or both of asparaginyl-tRNA or glutaminyl-tRNA synthetases. The reaction takes place in the presence of glutamine and ATP through an activated phospho-Asp-tRNA(Asn) or phospho-Glu-tRNA(Gln). The sequence is that of Aspartyl/glutamyl-tRNA(Asn/Gln) amidotransferase subunit C from Bordetella bronchiseptica (strain ATCC BAA-588 / NCTC 13252 / RB50) (Alcaligenes bronchisepticus).